Consider the following 141-residue polypeptide: Hemoglobin subunit alpha-D (141 aa).

The Globin domain occupies 1-141 (MLTAEDKKLI…VAAVLAEKYR (141 aa)). Heme b is bound by residues His58 and His87.

It belongs to the globin family. In terms of assembly, heterotetramer of two alpha-D chains and two beta chains. As to expression, red blood cells.

Its function is as follows. Involved in oxygen transport from the lung to the various peripheral tissues. The chain is Hemoglobin subunit alpha-D (HBAD) from Anas platyrhynchos (Mallard).